Here is a 143-residue protein sequence, read N- to C-terminus: Ribonuclease P protein component (143 aa).

Residues 111–143 (RVKRKGGGPGGNRRSAPPGSAPLTDDGRLRGEP) are disordered.

This sequence belongs to the RnpA family. As to quaternary structure, consists of a catalytic RNA component (M1 or rnpB) and a protein subunit.

The enzyme catalyses Endonucleolytic cleavage of RNA, removing 5'-extranucleotides from tRNA precursor.. Its function is as follows. RNaseP catalyzes the removal of the 5'-leader sequence from pre-tRNA to produce the mature 5'-terminus. It can also cleave other RNA substrates such as 4.5S RNA. The protein component plays an auxiliary but essential role in vivo by binding to the 5'-leader sequence and broadening the substrate specificity of the ribozyme. This is Ribonuclease P protein component from Deinococcus geothermalis (strain DSM 11300 / CIP 105573 / AG-3a).